A 131-amino-acid polypeptide reads, in one-letter code: MSMRRSKAEGKRSLRELSEEEEEEEETEDEDTFEEEEALEKKQKGKATSSSGVCQVESCTADMSKAKQYHKRHKVCQFHAKAPHVRISGLHQRFCQQCSRFHALSEFDEAKRSCRRRLAGHNERRRKSTTD.

Residues 1-17 (MSMRRSKAEGKRSLREL) show a composition bias toward basic and acidic residues. Residues 1–54 (MSMRRSKAEGKRSLRELSEEEEEEEETEDEDTFEEEEALEKKQKGKATSSSGVC) are disordered. Residues 18–38 (SEEEEEEEETEDEDTFEEEEA) are compositionally biased toward acidic residues. The tract at residues 45-129 (GKATSSSGVC…GHNERRRKST (85 aa)) is sufficient and necessary for DNA binding. The SBP-type zinc finger occupies 51–128 (SGVCQVESCT…AGHNERRRKS (78 aa)). 8 residues coordinate Zn(2+): Cys54, Cys59, Cys76, His79, Cys95, Cys98, His102, and Cys114. The Bipartite nuclear localization signal signature appears at 111–127 (KRSCRRRLAGHNERRRK).

Requires Zn(2+) as cofactor. As to expression, expressed in vegetative and inflorescence apical meristems, floral meristems, leaf and flower organ primordia, inflorescence stem tissue and to lower extent in roots.

The protein resides in the nucleus. It localises to the cytoplasm. Trans-acting factor that binds specifically to the consensus nucleotide sequence 5'-TNCGTACAA-3' of AP1 promoter. Binds specifically to the 5'-GTAC-3' core sequence. Promotes both vegetative phase change and flowering. Regulates phase-specific patterns of leaf epidermal differentiation and flowering time, but does not seem to affect leaf shape. The chain is Squamosa promoter-binding-like protein 3 (SPL3) from Arabidopsis thaliana (Mouse-ear cress).